We begin with the raw amino-acid sequence, 347 residues long: NADH-ubiquinone oxidoreductase chain 2 (347 aa).

Transmembrane regions (helical) follow at residues 3–23, 59–79, 93–115, 150–170, 178–198, 199–219, 242–262, 274–294, and 326–346; these read PLAL…TMMS, YFMT…INLM, VASN…HFWV, NTNL…WGGL, ILAY…PFNP, TLTL…FMIL, IMLM…GFMP, NSII…YFYM, and LPTL…ISML.

Belongs to the complex I subunit 2 family. As to quaternary structure, core subunit of respiratory chain NADH dehydrogenase (Complex I) which is composed of 45 different subunits. Interacts with TMEM242.

The protein resides in the mitochondrion inner membrane. The enzyme catalyses a ubiquinone + NADH + 5 H(+)(in) = a ubiquinol + NAD(+) + 4 H(+)(out). Functionally, core subunit of the mitochondrial membrane respiratory chain NADH dehydrogenase (Complex I) which catalyzes electron transfer from NADH through the respiratory chain, using ubiquinone as an electron acceptor. Essential for the catalytic activity and assembly of complex I. This chain is NADH-ubiquinone oxidoreductase chain 2, found in Loxodonta africana (African elephant).